We begin with the raw amino-acid sequence, 504 residues long: Pup--protein ligase (504 aa).

Residue E30 coordinates Mg(2+). R74 contacts ATP. Y76 is a binding site for Mg(2+). D78 acts as the Proton acceptor in catalysis. Position 84 (E84) interacts with Mg(2+). Residues T87 and W459 each contribute to the ATP site.

The protein belongs to the Pup ligase/Pup deamidase family. Pup-conjugating enzyme subfamily.

The catalysed reaction is ATP + [prokaryotic ubiquitin-like protein]-L-glutamate + [protein]-L-lysine = ADP + phosphate + N(6)-([prokaryotic ubiquitin-like protein]-gamma-L-glutamyl)-[protein]-L-lysine.. The protein operates within protein degradation; proteasomal Pup-dependent pathway. It participates in protein modification; protein pupylation. Its function is as follows. Catalyzes the covalent attachment of the prokaryotic ubiquitin-like protein modifier Pup to the proteasomal substrate proteins, thereby targeting them for proteasomal degradation. This tagging system is termed pupylation. The ligation reaction involves the side-chain carboxylate of the C-terminal glutamate of Pup and the side-chain amino group of a substrate lysine. This Corynebacterium urealyticum (strain ATCC 43042 / DSM 7109) protein is Pup--protein ligase.